Consider the following 267-residue polypeptide: Ribosomal RNA small subunit methyltransferase A (267 aa).

The S-adenosyl-L-methionine site is built by N18, L20, G45, E66, D91, and N112.

The protein belongs to the class I-like SAM-binding methyltransferase superfamily. rRNA adenine N(6)-methyltransferase family. RsmA subfamily.

The protein resides in the cytoplasm. The enzyme catalyses adenosine(1518)/adenosine(1519) in 16S rRNA + 4 S-adenosyl-L-methionine = N(6)-dimethyladenosine(1518)/N(6)-dimethyladenosine(1519) in 16S rRNA + 4 S-adenosyl-L-homocysteine + 4 H(+). Its function is as follows. Specifically dimethylates two adjacent adenosines (A1518 and A1519) in the loop of a conserved hairpin near the 3'-end of 16S rRNA in the 30S particle. May play a critical role in biogenesis of 30S subunits. This chain is Ribosomal RNA small subunit methyltransferase A, found in Shewanella amazonensis (strain ATCC BAA-1098 / SB2B).